Consider the following 220-residue polypeptide: Small ribosomal subunit protein uS5 (220 aa).

The disordered stretch occupies residues methionine 1–lysine 39. A compositionally biased stretch (basic and acidic residues) spans aspartate 13–lysine 39. The S5 DRBM domain maps to tyrosine 42–valine 105.

The protein belongs to the universal ribosomal protein uS5 family. Part of the 30S ribosomal subunit. Contacts proteins S4 and S8.

Its function is as follows. With S4 and S12 plays an important role in translational accuracy. Functionally, located at the back of the 30S subunit body where it stabilizes the conformation of the head with respect to the body. The protein is Small ribosomal subunit protein uS5 of Mycobacterium bovis (strain ATCC BAA-935 / AF2122/97).